The chain runs to 304 residues: MGLPNAEEVKAFLMQLQANICAGLERLDGQASFATDSWQRAEGGGGISRVLTDGAVFEQAGVNFSHVMGASMPASATAHRPELAGRSFEAMGVSLVIHPKNPYIPTTHANVRFFIARKEGADPVWWFGGGFDLTPYYPFESDVKEWHQSAKDLCAPFGNEVYPKYKEWCDKYFFLPHRGETRGVGGLFFDDLNHWEFDKCFDYMQAVGNGFLTAYAPIVERRKDTAYGERERDFQLYRRGRYVEFNLVYDRGTLFGLQTGGRTESILMSMPPLVRWQYAYSPEAGTPEAELYERFLKPQDWLAD.

S94 lines the substrate pocket. Positions 98 and 108 each coordinate a divalent metal cation. The active-site Proton donor is the H108. Position 110–112 (110–112 (NVR)) interacts with substrate. Residues H147 and H177 each contribute to the a divalent metal cation site. The interval 242–277 (YVEFNLVYDRGTLFGLQTGGRTESILMSMPPLVRWQ) is important for dimerization. 260 to 262 (GGR) contacts substrate.

The protein belongs to the aerobic coproporphyrinogen-III oxidase family. As to quaternary structure, homodimer. The cofactor is a divalent metal cation.

It is found in the cytoplasm. The enzyme catalyses coproporphyrinogen III + O2 + 2 H(+) = protoporphyrinogen IX + 2 CO2 + 2 H2O. Its pathway is porphyrin-containing compound metabolism; protoporphyrin-IX biosynthesis; protoporphyrinogen-IX from coproporphyrinogen-III (O2 route): step 1/1. Its function is as follows. Involved in the heme biosynthesis. Catalyzes the aerobic oxidative decarboxylation of propionate groups of rings A and B of coproporphyrinogen-III to yield the vinyl groups in protoporphyrinogen-IX. This chain is Oxygen-dependent coproporphyrinogen-III oxidase, found in Shewanella amazonensis (strain ATCC BAA-1098 / SB2B).